The chain runs to 543 residues: MLCHQCQETIKGTGCTQMGVCGKKDNTANLQDVLIYTLKGIAYVSNKTGITNNEIDSHIVDSLFATITNVNFDDKYIIERIKKGLKLKNDLRTKCGCTPEKCGELPDFVTWDAKNDLEILEKAKSKEISLEIPENEDMRSLRKITLYGIKGLCAYLHHANVLGYNDEEIQKFIKKALIDISDDLKSPEELTALVLETGKYVVDTMALLDKANTESYGNPEITEVNIGVKNNHGILISGHDLKDLEQLLNQTKGTGIDVYTHSEMLPAHYYPAFKKYDNFVGNYGGSWYLQKTEFDSFNGPIVMTTNCLVPPADEYKNRVYVTGVVGYPDVKTIPVNEDGTKDFSKVIEHAKLCKPPKELETGKIVGGFAHNQVLALADKVIDAVKSGAIKKFVVMAGCDGRHKTREYYTDFAKKLPKDAVILTAGCAKYRYNKLDLGDIGGIPRILDAGQCNDCYSLAVIALKLKEAFGLNDVNELPIVYNIAWYEQKAVAVLLALLYLGIQNIHLGPTLPDFISPNVAKLLVEKFKLNGITTVNEDMNLLLE.

[4Fe-4S] cluster contacts are provided by Cys3, Cys6, Cys15, and Cys21. Residues His239, Glu263, Cys307, Cys398, Cys426, Cys451, Glu486, and Lys488 each contribute to the hybrid [4Fe-2O-2S] cluster site. Cys398 is modified (cysteine persulfide).

It belongs to the HCP family. [4Fe-4S] cluster serves as cofactor. Hybrid [4Fe-2O-2S] cluster is required as a cofactor.

Its subcellular location is the cytoplasm. The catalysed reaction is A + NH4(+) + H2O = hydroxylamine + AH2 + H(+). Its function is as follows. Catalyzes the reduction of hydroxylamine to form NH(3) and H(2)O. In Methanococcus vannielii (strain ATCC 35089 / DSM 1224 / JCM 13029 / OCM 148 / SB), this protein is Hydroxylamine reductase.